The chain runs to 1347 residues: DExH-box ATP-dependent RNA helicase DExH11 (1347 aa).

A disordered region spans residues 263–291 (ELEGDDHTAGSESPKAEAEPDAKASISNE). Positions 267–284 (DDHTAGSESPKAEAEPDA) are enriched in basic and acidic residues. A Helicase ATP-binding domain is found at 369 to 524 (ICCLEKGESV…WIGRTKQKEI (156 aa)). 382 to 389 (AHTSAGKT) lines the ATP pocket. The DEVH box motif lies at 472–475 (DEVH). The tract at residues 566–625 (SQKKKNSNAVSVAPKQQMGSSAHQDGSKSQKHEAHSRGKQNKHSSVKDVGKSSYSGNSQN) is disordered. Positions 590-601 (DGSKSQKHEAHS) are enriched in basic and acidic residues. One can recognise a Helicase C-terminal domain in the interval 673–838 (DLTSSSEKSE…LTYIMILHLL (166 aa)).

Belongs to the DExH box helicase family. SKI2 subfamily. Component of the cytoplasmic SKI complex, which consists of SKI2, SKI3 and VIP3/SKI8. In terms of tissue distribution, expressed in vascular tissues of leaves and roots of young plants.

It is found in the cytoplasm. It catalyses the reaction ATP + H2O = ADP + phosphate + H(+). Functionally, component of the SKI complex which is thought to be involved in exosome-mediated RNA decay and associates with transcriptionally active genes in a manner dependent on PAF1 complex (PAF1C). Involved in the regulation of potassium deprivation stress response. The protein is DExH-box ATP-dependent RNA helicase DExH11 of Arabidopsis thaliana (Mouse-ear cress).